We begin with the raw amino-acid sequence, 293 residues long: Phosphatidylserine decarboxylase proenzyme (293 aa).

Catalysis depends on charge relay system; for autoendoproteolytic cleavage activity residues D88, H144, and S247. Residue S247 is the Schiff-base intermediate with substrate; via pyruvic acid; for decarboxylase activity of the active site. S247 is modified (pyruvic acid (Ser); by autocatalysis).

This sequence belongs to the phosphatidylserine decarboxylase family. PSD-B subfamily. Prokaryotic type I sub-subfamily. Heterodimer of a large membrane-associated beta subunit and a small pyruvoyl-containing alpha subunit. The cofactor is pyruvate. In terms of processing, is synthesized initially as an inactive proenzyme. Formation of the active enzyme involves a self-maturation process in which the active site pyruvoyl group is generated from an internal serine residue via an autocatalytic post-translational modification. Two non-identical subunits are generated from the proenzyme in this reaction, and the pyruvate is formed at the N-terminus of the alpha chain, which is derived from the carboxyl end of the proenzyme. The autoendoproteolytic cleavage occurs by a canonical serine protease mechanism, in which the side chain hydroxyl group of the serine supplies its oxygen atom to form the C-terminus of the beta chain, while the remainder of the serine residue undergoes an oxidative deamination to produce ammonia and the pyruvoyl prosthetic group on the alpha chain. During this reaction, the Ser that is part of the protease active site of the proenzyme becomes the pyruvoyl prosthetic group, which constitutes an essential element of the active site of the mature decarboxylase.

The protein resides in the cell membrane. It catalyses the reaction a 1,2-diacyl-sn-glycero-3-phospho-L-serine + H(+) = a 1,2-diacyl-sn-glycero-3-phosphoethanolamine + CO2. It participates in phospholipid metabolism; phosphatidylethanolamine biosynthesis; phosphatidylethanolamine from CDP-diacylglycerol: step 2/2. Its function is as follows. Catalyzes the formation of phosphatidylethanolamine (PtdEtn) from phosphatidylserine (PtdSer). This chain is Phosphatidylserine decarboxylase proenzyme, found in Xylella fastidiosa (strain M23).